The chain runs to 570 residues: Urease subunit alpha (570 aa).

One can recognise a Urease domain in the interval Gly-131–Phe-570. Positions 136, 138, and 219 each coordinate Ni(2+). Lys-219 carries the N6-carboxylysine modification. A substrate-binding site is contributed by His-221. Ni(2+)-binding residues include His-248 and His-274. Residue His-322 is the Proton donor of the active site. Asp-362 contacts Ni(2+).

The protein belongs to the metallo-dependent hydrolases superfamily. Urease alpha subunit family. Heterotrimer of UreA (gamma), UreB (beta) and UreC (alpha) subunits. Three heterotrimers associate to form the active enzyme. Requires Ni cation as cofactor. In terms of processing, carboxylation allows a single lysine to coordinate two nickel ions.

The protein resides in the cytoplasm. It catalyses the reaction urea + 2 H2O + H(+) = hydrogencarbonate + 2 NH4(+). The protein operates within nitrogen metabolism; urea degradation; CO(2) and NH(3) from urea (urease route): step 1/1. The polypeptide is Urease subunit alpha (Sinorhizobium medicae (strain WSM419) (Ensifer medicae)).